A 356-amino-acid polypeptide reads, in one-letter code: DNA polymerase IV (356 aa).

Positions 7–188 constitute a UmuC domain; it reads IIHIDMDCFY…LPLKKIPGVG (182 aa). Mg(2+) contacts are provided by D11 and D106. E107 is an active-site residue.

The protein belongs to the DNA polymerase type-Y family. As to quaternary structure, monomer. Mg(2+) is required as a cofactor.

The protein localises to the cytoplasm. It catalyses the reaction DNA(n) + a 2'-deoxyribonucleoside 5'-triphosphate = DNA(n+1) + diphosphate. Poorly processive, error-prone DNA polymerase involved in untargeted mutagenesis. Copies undamaged DNA at stalled replication forks, which arise in vivo from mismatched or misaligned primer ends. These misaligned primers can be extended by PolIV. Exhibits no 3'-5' exonuclease (proofreading) activity. May be involved in translesional synthesis, in conjunction with the beta clamp from PolIII. The polypeptide is DNA polymerase IV (Actinobacillus pleuropneumoniae serotype 3 (strain JL03)).